A 206-amino-acid polypeptide reads, in one-letter code: FMN-dependent NADH:quinone oxidoreductase 2 (206 aa).

FMN contacts are provided by residues Ser10, 16–18, and 140–143; these read SYS and SCGG.

The protein belongs to the azoreductase type 1 family. In terms of assembly, homodimer. The cofactor is FMN.

The enzyme catalyses 2 a quinone + NADH + H(+) = 2 a 1,4-benzosemiquinone + NAD(+). The catalysed reaction is N,N-dimethyl-1,4-phenylenediamine + anthranilate + 2 NAD(+) = 2-(4-dimethylaminophenyl)diazenylbenzoate + 2 NADH + 2 H(+). Functionally, quinone reductase that provides resistance to thiol-specific stress caused by electrophilic quinones. Its function is as follows. Also exhibits azoreductase activity. Catalyzes the reductive cleavage of the azo bond in aromatic azo compounds to the corresponding amines. The protein is FMN-dependent NADH:quinone oxidoreductase 2 of Cupriavidus pinatubonensis (strain JMP 134 / LMG 1197) (Cupriavidus necator (strain JMP 134)).